The following is a 156-amino-acid chain: Peptide methionine sulfoxide reductase MsrA (156 aa).

C10 is an active-site residue.

This sequence belongs to the MsrA Met sulfoxide reductase family.

The catalysed reaction is L-methionyl-[protein] + [thioredoxin]-disulfide + H2O = L-methionyl-(S)-S-oxide-[protein] + [thioredoxin]-dithiol. The enzyme catalyses [thioredoxin]-disulfide + L-methionine + H2O = L-methionine (S)-S-oxide + [thioredoxin]-dithiol. Functionally, has an important function as a repair enzyme for proteins that have been inactivated by oxidation. Catalyzes the reversible oxidation-reduction of methionine sulfoxide in proteins to methionine. In Metamycoplasma arthritidis (strain 158L3-1) (Mycoplasma arthritidis), this protein is Peptide methionine sulfoxide reductase MsrA.